The chain runs to 153 residues: MSLIPSIFGGRRSNVFDPFSLDVWDPFKDFHFPTSLSAENSAFVNTRVDWKETPEAHVFEADIPGLKKEEVKVQIEDDRVLQISGERNLEKEDKNDTWHRVERSSGNFMRRFRLPENAKVEQVKASMENGVLTVTVPKEEVKKPDVKAIEISG.

The 115-residue stretch at 39 to 153 (ENSAFVNTRV…PDVKAIEISG (115 aa)) folds into the sHSP domain.

It belongs to the small heat shock protein (HSP20) family. As to quaternary structure, forms oligomeric structures.

The protein localises to the cytoplasm. This chain is 17.5 kDa class I heat shock protein (HSP17.5-M), found in Glycine max (Soybean).